The following is a 438-amino-acid chain: Lipoyl synthase, mitochondrial (438 aa).

The N-terminal 31 residues, 1-31 (MAASARGLRTLQSAHSSTTVPRLQLAVSRCY), are a transit peptide targeting the mitochondrion. The span at 34–57 (TTSPDPPITNSSNSSNSSNSTPTP) shows a compositional bias: low complexity. The segment at 34–58 (TTSPDPPITNSSNSSNSSNSTPTPK) is disordered. [4Fe-4S] cluster contacts are provided by cysteine 148, cysteine 153, cysteine 159, cysteine 179, cysteine 183, cysteine 186, and serine 394. Residues 162 to 383 (GSSKSAATAT…KERALEMGFL (222 aa)) form the Radical SAM core domain.

Belongs to the radical SAM superfamily. Lipoyl synthase family. Requires [4Fe-4S] cluster as cofactor.

It localises to the mitochondrion. The enzyme catalyses [[Fe-S] cluster scaffold protein carrying a second [4Fe-4S](2+) cluster] + N(6)-octanoyl-L-lysyl-[protein] + 2 oxidized [2Fe-2S]-[ferredoxin] + 2 S-adenosyl-L-methionine + 4 H(+) = [[Fe-S] cluster scaffold protein] + N(6)-[(R)-dihydrolipoyl]-L-lysyl-[protein] + 4 Fe(3+) + 2 hydrogen sulfide + 2 5'-deoxyadenosine + 2 L-methionine + 2 reduced [2Fe-2S]-[ferredoxin]. The protein operates within protein modification; protein lipoylation via endogenous pathway; protein N(6)-(lipoyl)lysine from octanoyl-[acyl-carrier-protein]: step 2/2. Its function is as follows. Catalyzes the radical-mediated insertion of two sulfur atoms into the C-6 and C-8 positions of the octanoyl moiety bound to the lipoyl domains of lipoate-dependent enzymes, thereby converting the octanoylated domains into lipoylated derivatives. The chain is Lipoyl synthase, mitochondrial from Paracoccidioides brasiliensis (strain Pb18).